A 356-amino-acid polypeptide reads, in one-letter code: uncharacterized protein (356 aa).

Transmembrane regions (helical) follow at residues 2-22, 36-56, 77-97, 99-119, 124-144, and 154-174; these read FEAI…FHRL, YVTV…VPIF, MFYT…IGDY, IITA…GPFL, IISL…LSLI, and LFLI…FVDI. The GGDEF domain occupies 218-353; it reads QSLGLLLIDI…GRNQVMFNPI (136 aa).

The protein localises to the cell membrane. This is an uncharacterized protein from Staphylococcus saprophyticus subsp. saprophyticus (strain ATCC 15305 / DSM 20229 / NCIMB 8711 / NCTC 7292 / S-41).